The following is a 150-amino-acid chain: U1 small nuclear ribonucleoprotein C (150 aa).

The Matrin-type zinc-finger motif lies at 4–36; it reads YYCDYCKSYLTHDTMSVRKSHLQGRNHIKFYCD. The interval 66–127 is disordered; sequence SDAKKSNGSS…PPNLSGLPLP (62 aa). Over residues 80-92 the composition is skewed to basic and acidic residues; it reads DIDKKENSSDHNK. Acidic residues predominate over residues 103–112; sequence NDNDDDDDEM.

It belongs to the U1 small nuclear ribonucleoprotein C family. In terms of assembly, U1 snRNP is composed of the 7 core Sm proteins B/B', D1, D2, D3, E, F and G that assemble in a heptameric protein ring on the Sm site of the small nuclear RNA to form the core snRNP, and at least 3 U1 snRNP-specific proteins U1-70K, U1-A and U1-C. U1-C interacts with U1 snRNA and the 5' splice-site region of the pre-mRNA.

The protein localises to the nucleus. Functionally, component of the spliceosomal U1 snRNP, which is essential for recognition of the pre-mRNA 5' splice-site and the subsequent assembly of the spliceosome. U1-C is directly involved in initial 5' splice-site recognition for both constitutive and regulated alternative splicing. The interaction with the 5' splice-site seems to precede base-pairing between the pre-mRNA and the U1 snRNA. Stimulates commitment or early (E) complex formation by stabilizing the base pairing of the 5' end of the U1 snRNA and the 5' splice-site region. This chain is U1 small nuclear ribonucleoprotein C, found in Candida albicans (strain WO-1) (Yeast).